A 189-amino-acid chain; its full sequence is Blue copper protein (189 aa).

The N-terminal stretch at methionine 1–alanine 24 is a signal peptide. Residues threonine 25–alanine 124 form the Phytocyanin domain. 3 residues coordinate Cu cation: histidine 65, cysteine 106, and histidine 111. A disulfide bond links cysteine 78 and cysteine 106. Residues glycine 127–threonine 160 are compositionally biased toward low complexity. Residues glycine 127–serine 165 are disordered. Asparagine 163 carries an N-linked (GlcNAc...) asparagine glycan.

The polypeptide is Blue copper protein (Pisum sativum (Garden pea)).